Here is a 205-residue protein sequence, read N- to C-terminus: Methylamine utilization protein MauD (205 aa).

The helical transmembrane segment at 5-25 threads the bilayer; that stretch reads FLIASNVLLWLALIGCAVLML. The 135-residue stretch at 50-184 folds into the Thioredoxin domain; that stretch reads PDVGDAAPTF…LESLLEADKS (135 aa).

It is found in the membrane. It participates in one-carbon metabolism; methylamine degradation. May be specifically involved in the processing, transport, and/or maturation of the MADH beta-subunit. In Methylorubrum extorquens (strain ATCC 14718 / DSM 1338 / JCM 2805 / NCIMB 9133 / AM1) (Methylobacterium extorquens), this protein is Methylamine utilization protein MauD (mauD).